The sequence spans 174 residues: Gamma-crystallin C (174 aa).

2 Beta/gamma crystallin 'Greek key' domains span residues 2-40 (GKIT…RVDS) and 41-83 (GCWM…CLIP). C23 is modified (S-methylcysteine). Residues 84 to 87 (QTSS) are connecting peptide. 2 consecutive Beta/gamma crystallin 'Greek key' domains span residues 88 to 128 (HRLR…HVLE) and 129 to 171 (GCWV…RRVV).

The protein belongs to the beta/gamma-crystallin family. Monomer.

In terms of biological role, crystallins are the dominant structural components of the vertebrate eye lens. This Canis lupus familiaris (Dog) protein is Gamma-crystallin C (CRYGC).